Reading from the N-terminus, the 3595-residue chain is Replicase polyprotein 1ab (3595 aa).

The C4-type; atypical zinc-finger motif lies at 3-23 (CECPRSNLVVMCSGAFCCVLC). Residues 56-164 (SGLEGRYCAL…PTTIPFNTTG (109 aa)) enclose the Peptidase C31 domain. Active-site for Nsp1-alpha papain-like cysteine proteinase activity residues include Cys63 and His130. Residues 239–350 (LSFEHGRCWL…LKLPGKTYFG (112 aa)) enclose the Peptidase C32 domain. Active-site for Nsp1-beta papain-like cysteine proteinase activity residues include Cys246 and His309. Catalysis depends on for Nsp2 cysteine proteinase activity residues Cys378 and His430. Positions 482–527 (RRGGGKKSGQSSGVRAPGRTTPDLAGDWGKAVDDQEKTASKVTTDK) are disordered. Residues 511 to 520 (KAVDDQEKTA) are compositionally biased toward basic and acidic residues. Residues 633–736 (TFIPPPDGGC…HGWCSSLLSE (104 aa)) enclose the Peptidase C33 domain. The disordered stretch occupies residues 808–862 (QVRTVDPSQPAAPLPPVPRPRKRKAAAQQVSKVPSEQDPSLAHDPPEKPDSVRPP). A compositionally biased stretch (basic and acidic residues) spans 851–860 (DPPEKPDSVR). Transmembrane regions (helical) follow at residues 922-942 (MFFL…AGVI), 951-971 (ILCC…AISS), 1019-1039 (VALF…VIGV), 1239-1259 (IFRT…GYWV), 1316-1336 (PYIV…PGII), 1345-1365 (ALLP…IIAA), and 1381-1401 (AFVD…GWIL). Residues 922 to 1039 (MFFLFLGSPL…MVDVLLVIGV (118 aa)) form an HD1 region. An HD2 region spans residues 1239 to 1399 (IFRTALAAAW…VVLTALLVGW (161 aa)). A Peptidase S32 domain is found at 1464 to 1664 (GLLREKTRAS…RLLESSINLE (201 aa)). Residues His1502, Asp1527, and Ser1580 each act as charge relay system; for 3C-like serine proteinase activity in the active site. The next 4 helical transmembrane spans lie at 1673 to 1693 (IIVA…PFVV), 1711 to 1731 (YNYS…IFFI), 1744 to 1764 (ALIC…IILG), and 1784 to 1804 (AIAI…LELF). The interval 1687–1804 (LSIPFVVAFF…CVAACCLELF (118 aa)) is HD3. The 171-residue stretch at 2083–2253 (DMNRLRAIIS…YPYKLHPVRG (171 aa)) folds into the NiRAN domain. Residues 2491-2625 (GRCLETDLAS…LNESDDLPNF (135 aa)) enclose the RdRp catalytic domain. The AV ZBD domain occupies 2746-2812 (GKEVQVCSIC…IPILKDRTKF (67 aa)). Zn(2+) is bound by residues Cys2752, Cys2755, Cys2765, Cys2770, Cys2773, His2777, His2779, Cys2782, Cys2789, His2791, Cys2798, and Cys2801. In terms of domain architecture, (+)RNA virus helicase ATP-binding spans 2862 to 3022 (DLPDGKYSMK…VFELMKKNAL (161 aa)). 2897 to 2904 (GPPGSGKT) lines the ATP pocket. The (+)RNA virus helicase C-terminal domain maps to 3023–3157 (HAIYRFGQNI…DGKARVMLSD (135 aa)). The AV-Nsp11N/CoV-Nsp15M domain occupies 3196 to 3292 (SGSLSPLPRV…LTKFLDGRAV (97 aa)). A NendoU domain is found at 3294 to 3416 (MEDSVYSTGR…MVWRDQTMYF (123 aa)). Catalysis depends on residues His3325, His3340, and Lys3369.

It belongs to the arteriviridae polyprotein family. Specific enzymatic cleavages in vivo by its own proteases yield mature proteins. There are two alternative pathways for processing. Either nsp4-5 is cleaved, which represents the major pathway or the nsp5-6 and nsp6-7 are processed, which represents the minor pathway. The major pathway occurs when nsp2 acts as a cofactor for nsp4.

The protein resides in the host membrane. It is found in the host cytoplasm. The protein localises to the host perinuclear region. It catalyses the reaction RNA(n) + a ribonucleoside 5'-triphosphate = RNA(n+1) + diphosphate. It carries out the reaction ATP + H2O = ADP + phosphate + H(+). The catalysed reaction is uridylyl-uridylyl-ribonucleotide-RNA = a 3'-end uridylyl-2',3'-cyclophospho-uridine-RNA + a 5'-end dephospho-ribonucleoside-RNA. Its function is as follows. The replicase polyprotein 1ab is a multifunctional protein: it contains the activities necessary for the transcription of negative stranded RNA, leader RNA, subgenomic mRNAs and progeny virion RNA as well as proteinases responsible for the cleavage of the polyprotein into functional products. Functionally, the Nsp1 chain is essential for viral subgenomic mRNA synthesis. The 3C-like serine proteinase chain is responsible for the majority of cleavages as it cleaves the C-terminus of the polyprotein. In terms of biological role, plays a role in viral transcription/replication and prevents the simultaneous activation of host cell dsRNA sensors, such as MDA5/IFIH1, OAS, and PKR. Acts by degrading the 5'-polyuridines generated during replication of the poly(A) region of viral genomic and subgenomic RNAs. Catalyzes a two-step reaction in which a 2'3'-cyclic phosphate (2'3'-cP) is first generated by 2'-O transesterification, which is then hydrolyzed to a 3'-phosphate (3'-P). If not degraded, poly(U) RNA would hybridize with poly(A) RNA tails and activate host dsRNA sensors. Its function is as follows. The helicase chain, which contains a zinc finger structure, displays RNA and DNA duplex-unwinding activities with 5' to 3' polarity. The protein is Replicase polyprotein 1ab (rep) of Simian hemorrhagic fever virus (SHFV).